We begin with the raw amino-acid sequence, 187 residues long: Interferon beta (187 aa).

Positions 1–21 (MTSRSLLPFVLSLLLPRIIMA) are cleaved as a signal peptide. Position 24 is a phosphotyrosine (Tyr24). Cysteines 53 and 162 form a disulfide. N-linked (GlcNAc...) asparagine glycans are attached at residues Asn76, Asn95, Asn132, and Asn158.

The protein belongs to the alpha/beta interferon family. In terms of assembly, monomer.

It localises to the secreted. In terms of biological role, type I interferon cytokine that plays a key role in the innate immune response to infection, developing tumors and other inflammatory stimuli. Signals via binding to high-affinity (IFNAR2) and low-affinity (IFNAR1) heterodimeric receptor, activating the canonical Jak-STAT signaling pathway resulting in transcriptional activation or repression of interferon-regulated genes that encode the effectors of the interferon response, such as antiviral proteins, regulators of cell proliferation and differentiation, and immunoregulatory proteins. Signals mostly via binding to a IFNAR1-IFNAR2 heterodimeric receptor, but can also function with IFNAR1 alone and independently of Jak-STAT pathways. Elicits a wide variety of responses, including antiviral and antibacterial activities, and can regulate the development of B-cells, myelopoiesis and lipopolysaccharide (LPS)-inducible production of tumor necrosis factor. Plays a role in neuronal homeostasis by regulating dopamine turnover and protecting dopaminergic neurons: acts by promoting neuronal autophagy and alpha-synuclein clearance, thereby preventing dopaminergic neuron loss. IFNB1 is more potent than interferon-alpha (IFN-alpha) in inducing the apoptotic and antiproliferative pathways required for control of tumor cell growth. This is Interferon beta (IFNB1) from Tachyglossus aculeatus aculeatus (Southeast Australian short-beaked echidna).